A 485-amino-acid chain; its full sequence is NADH-quinone oxidoreductase subunit N (485 aa).

14 consecutive transmembrane segments (helical) span residues 8 to 28 (LIAL…MLCI), 35 to 55 (FVNA…LYFV), 75 to 95 (FYTG…YPWL), 105 to 125 (FYLL…ANHL), 127 to 147 (SLFI…GYAF), 159 to 179 (YMLL…LIYA), 203 to 223 (LLAG…LVPF), 235 to 255 (PAPV…GAVM), 271 to 291 (IVLS…AVSQ), 297 to 317 (LLGY…IAVQ), 326 to 346 (VGVY…VVSL), 374 to 394 (AVMT…GFFG), 407 to 426 (LWWL…YYYL), and 449 to 469 (ALTA…FFGL).

This sequence belongs to the complex I subunit 2 family. In terms of assembly, NDH-1 is composed of 13 different subunits. Subunits NuoA, H, J, K, L, M, N constitute the membrane sector of the complex.

Its subcellular location is the cell inner membrane. It catalyses the reaction a quinone + NADH + 5 H(+)(in) = a quinol + NAD(+) + 4 H(+)(out). Its function is as follows. NDH-1 shuttles electrons from NADH, via FMN and iron-sulfur (Fe-S) centers, to quinones in the respiratory chain. The immediate electron acceptor for the enzyme in this species is believed to be ubiquinone. Couples the redox reaction to proton translocation (for every two electrons transferred, four hydrogen ions are translocated across the cytoplasmic membrane), and thus conserves the redox energy in a proton gradient. In Pectobacterium atrosepticum (strain SCRI 1043 / ATCC BAA-672) (Erwinia carotovora subsp. atroseptica), this protein is NADH-quinone oxidoreductase subunit N.